The chain runs to 617 residues: Urocanate reductase (617 aa).

T70 is modified (FMN phosphoryl threonine). FAD contacts are provided by A124, E143, N151, T152, G156, G157, and D387. R446 serves as the catalytic Proton donor. FAD is bound by residues H553, E582, and L598.

This sequence belongs to the FAD-dependent oxidoreductase 2 family. FRD/SDH subfamily. FAD is required as a cofactor. The cofactor is FMN.

The enzyme catalyses dihydrourocanate + A = urocanate + AH2. In terms of biological role, catalyzes the two-electron reduction of urocanate to dihydrourocanate (also named imidazole propionate or deamino-histidine). Dihydrourocanate is present at higher concentrations in subjects with type 2 diabetes, and directly impairs glucose tolerance and insulin signaling at the level of insulin receptor substrate (IRS) through activation of p38 gamma (MAPK12)-p62-mTORC1. Therefore, the UrdA enzyme from the gut bacteria L.fermentum strain NBRC 3956 may contribute to the pathogenesis of type 2 diabetes by producing the microbial metabolite dihydrourocanate. The polypeptide is Urocanate reductase (Limosilactobacillus fermentum (strain NBRC 3956 / LMG 18251) (Lactobacillus fermentum)).